Here is a 487-residue protein sequence, read N- to C-terminus: Betaine aldehyde dehydrogenase 1 (487 aa).

Residues Ser26, Ile27, and Asp93 each contribute to the K(+) site. Residue 150-152 (GAW) coordinates NAD(+). The Charge relay system role is filled by Lys162. NAD(+)-binding positions include 176 to 179 (KPSE) and 229 to 232 (SVPT). K(+) is bound at residue Leu244. The Proton acceptor role is filled by Glu250. Gly252, Cys284, and Glu384 together coordinate NAD(+). Residue Cys284 is the Nucleophile of the active site. Residue Cys284 is modified to Cysteine sulfenic acid (-SOH). Positions 454 and 457 each coordinate K(+). Glu461 (charge relay system) is an active-site residue.

Belongs to the aldehyde dehydrogenase family. In terms of assembly, dimer of dimers. The cofactor is K(+).

It carries out the reaction betaine aldehyde + NAD(+) + H2O = glycine betaine + NADH + 2 H(+). Its pathway is amine and polyamine biosynthesis; betaine biosynthesis via choline pathway; betaine from betaine aldehyde: step 1/1. Involved in the biosynthesis of the osmoprotectant glycine betaine. Catalyzes the irreversible oxidation of betaine aldehyde to the corresponding acid. This is Betaine aldehyde dehydrogenase 1 from Rhizobium meliloti (strain 1021) (Ensifer meliloti).